The chain runs to 435 residues: MEPRVGNKYRLGRKIGSGSFGEIYLGTHIQTNEEVAIKLENVKTKHPQLLYESKLYRILQGGTGVPNIKWFGVEGDYNTLVMDLLGPSLEDLFNFCSRKLSLKSVLMLADQMINRVEYFHSKSFLHRDLKPDNFLMGLGRRANQVHIIDFGLAKKYRDNTTHQHIPYRENKNLTGTARYASMNTHLGIEQSRRDDLESLGYILMYFLKGSLPWQGLKAGTKKQKYERISEKKVSTSIESLCRGYPSEFASYFHYCRSLRFDDKPDYGYLKRIFRDLFIREGFQFDYVFDWTILKYQQSQLTAPPSRGLVSPAVGTSAGLPPGLTSIDRYGGEEEGGRPPMDSSRRRMSGALENSGNLSSRGPMMPSSSLFAQSAGSSRRVTSEELQRCRTGAGLRNSPVVTTPEGKRSSSTRKHYDSAIKGIETLQVSDERFHHH.

The Protein kinase domain occupies 9-278; that stretch reads YRLGRKIGSG…LKRIFRDLFI (270 aa). Residues 15–23 and Lys38 contribute to the ATP site; that span reads IGSGSFGEI. The Proton acceptor role is filled by Asp128. Disordered regions lie at residues 313–363 and 394–414; these read VGTS…RGPM and LRNS…TRKH.

It belongs to the protein kinase superfamily. CK1 Ser/Thr protein kinase family. Casein kinase I subfamily. As to quaternary structure, monomer. Autophosphorylated.

It is found in the cytoplasm. It catalyses the reaction L-seryl-[protein] + ATP = O-phospho-L-seryl-[protein] + ADP + H(+). It carries out the reaction L-threonyl-[protein] + ATP = O-phospho-L-threonyl-[protein] + ADP + H(+). Its function is as follows. Casein kinases are operationally defined by their preferential utilization of acidic proteins such as caseins as substrates. It can phosphorylate a large number of proteins. In Arabidopsis thaliana (Mouse-ear cress), this protein is Casein kinase 1-like protein 12.